The primary structure comprises 656 residues: Translation factor GUF1, mitochondrial (656 aa).

The N-terminal 28 residues, methionine 1–arginine 28, are a transit peptide targeting the mitochondrion. In terms of domain architecture, tr-type G spans glutamate 55–aspartate 235. GTP is bound by residues alanine 64–serine 71, aspartate 128–histidine 132, and asparagine 182–aspartate 185.

This sequence belongs to the TRAFAC class translation factor GTPase superfamily. Classic translation factor GTPase family. LepA subfamily.

It is found in the mitochondrion inner membrane. It catalyses the reaction GTP + H2O = GDP + phosphate + H(+). Functionally, promotes mitochondrial protein synthesis. May act as a fidelity factor of the translation reaction, by catalyzing a one-codon backward translocation of tRNAs on improperly translocated ribosomes. Binds to mitochondrial ribosomes in a GTP-dependent manner. The sequence is that of Translation factor GUF1, mitochondrial from Yarrowia lipolytica (strain CLIB 122 / E 150) (Yeast).